Here is a 344-residue protein sequence, read N- to C-terminus: Dihydroorotase (344 aa).

H14 and H16 together coordinate Zn(2+). Substrate-binding positions include H16–R18 and N42. K100, H137, and H175 together coordinate Zn(2+). The residue at position 100 (K100) is an N6-carboxylysine. H137 is a binding site for substrate. L220 serves as a coordination point for substrate. Residue D248 coordinates Zn(2+). Residue D248 is part of the active site. Residues H252 and A264 each contribute to the substrate site.

It belongs to the metallo-dependent hydrolases superfamily. DHOase family. Class II DHOase subfamily. As to quaternary structure, homodimer. Zn(2+) serves as cofactor.

It carries out the reaction (S)-dihydroorotate + H2O = N-carbamoyl-L-aspartate + H(+). It participates in pyrimidine metabolism; UMP biosynthesis via de novo pathway; (S)-dihydroorotate from bicarbonate: step 3/3. Its function is as follows. Catalyzes the reversible cyclization of carbamoyl aspartate to dihydroorotate. The chain is Dihydroorotase from Ralstonia nicotianae (strain ATCC BAA-1114 / GMI1000) (Ralstonia solanacearum).